A 195-amino-acid polypeptide reads, in one-letter code: HTH-type transcriptional regulator BetI (195 aa).

The HTH tetR-type domain maps to 8 to 68; the sequence is PIRRRQLIDA…ATMRDITSQL (61 aa). The H-T-H motif DNA-binding region spans 31–50; the sequence is TIAQIARRAGVSTGIISHYF.

Its pathway is amine and polyamine biosynthesis; betaine biosynthesis via choline pathway [regulation]. Repressor involved in the biosynthesis of the osmoprotectant glycine betaine. It represses transcription of the choline transporter BetT and the genes of BetAB involved in the synthesis of glycine betaine. This Klebsiella pneumoniae (strain 342) protein is HTH-type transcriptional regulator BetI.